We begin with the raw amino-acid sequence, 49 residues long: Large ribosomal subunit protein bL33 (49 aa).

It belongs to the bacterial ribosomal protein bL33 family.

The sequence is that of Large ribosomal subunit protein bL33 from Finegoldia magna (strain ATCC 29328 / DSM 20472 / WAL 2508) (Peptostreptococcus magnus).